Reading from the N-terminus, the 348-residue chain is Sorbitol dehydrogenase (348 aa).

Cysteine 40, histidine 65, and glutamate 66 together coordinate Zn(2+). NAD(+) contacts are provided by residues isoleucine 179, aspartate 199, arginine 204, 269 to 271 (VGI), and 293 to 295 (SFR). Residue arginine 295 coordinates substrate.

This sequence belongs to the zinc-containing alcohol dehydrogenase family. As to quaternary structure, homotetramer. It depends on Zn(2+) as a cofactor.

It catalyses the reaction xylitol + NAD(+) = D-xylulose + NADH + H(+). The enzyme catalyses L-iditol + NAD(+) = keto-L-sorbose + NADH + H(+). It carries out the reaction keto-D-fructose + NADH + H(+) = D-sorbitol + NAD(+). In terms of biological role, polyol dehydrogenase that catalyzes the reversible NAD(+)-dependent oxidation of various sugar alcohols. Is active with xylitol, L-iditol and D-sorbitol (D-glucitol) as substrates, leading to the C2-oxidized products D-xylulose, L-sorbose and D-fructose, respectively. Is a key enzyme in the polyol pathway that interconverts glucose and fructose via sorbitol, which constitutes an important alternate route for glucose metabolism. The polypeptide is Sorbitol dehydrogenase (SDH) (Bombyx mori (Silk moth)).